The chain runs to 336 residues: Holliday junction branch migration complex subunit RuvB (336 aa).

The segment covering 1 to 11 (MDDDKLLSGDK) has biased composition (basic and acidic residues). Positions 1-21 (MDDDKLLSGDKADDEEASLEK) are disordered. A large ATPase domain (RuvB-L) region spans residues 1-184 (MDDDKLLSGD…FGIVEHMAYY (184 aa)). ATP contacts are provided by residues Leu23, Arg24, Gly65, Lys68, Thr69, Thr70, 131–133 (EDF), Arg174, Tyr184, and Arg221. Thr69 contacts Mg(2+). A small ATPAse domain (RuvB-S) region spans residues 185–255 (EVADLEDIVK…IVARSLTYLR (71 aa)). A head domain (RuvB-H) region spans residues 258-336 (DAGLDETDNK…HLGFPYPENK (79 aa)). DNA-binding residues include Arg313 and Arg318.

This sequence belongs to the RuvB family. As to quaternary structure, homohexamer. Forms an RuvA(8)-RuvB(12)-Holliday junction (HJ) complex. HJ DNA is sandwiched between 2 RuvA tetramers; dsDNA enters through RuvA and exits via RuvB. An RuvB hexamer assembles on each DNA strand where it exits the tetramer. Each RuvB hexamer is contacted by two RuvA subunits (via domain III) on 2 adjacent RuvB subunits; this complex drives branch migration. In the full resolvosome a probable DNA-RuvA(4)-RuvB(12)-RuvC(2) complex forms which resolves the HJ.

The protein localises to the cytoplasm. The catalysed reaction is ATP + H2O = ADP + phosphate + H(+). In terms of biological role, the RuvA-RuvB-RuvC complex processes Holliday junction (HJ) DNA during genetic recombination and DNA repair, while the RuvA-RuvB complex plays an important role in the rescue of blocked DNA replication forks via replication fork reversal (RFR). RuvA specifically binds to HJ cruciform DNA, conferring on it an open structure. The RuvB hexamer acts as an ATP-dependent pump, pulling dsDNA into and through the RuvAB complex. RuvB forms 2 homohexamers on either side of HJ DNA bound by 1 or 2 RuvA tetramers; 4 subunits per hexamer contact DNA at a time. Coordinated motions by a converter formed by DNA-disengaged RuvB subunits stimulates ATP hydrolysis and nucleotide exchange. Immobilization of the converter enables RuvB to convert the ATP-contained energy into a lever motion, pulling 2 nucleotides of DNA out of the RuvA tetramer per ATP hydrolyzed, thus driving DNA branch migration. The RuvB motors rotate together with the DNA substrate, which together with the progressing nucleotide cycle form the mechanistic basis for DNA recombination by continuous HJ branch migration. Branch migration allows RuvC to scan DNA until it finds its consensus sequence, where it cleaves and resolves cruciform DNA. The protein is Holliday junction branch migration complex subunit RuvB of Lactiplantibacillus plantarum (strain ATCC BAA-793 / NCIMB 8826 / WCFS1) (Lactobacillus plantarum).